Reading from the N-terminus, the 154-residue chain is Probable transport accessory protein MmpS4 (154 aa).

Transmembrane regions (helical) follow at residues Ile19 to Val39 and Gln97 to Ala117.

This sequence belongs to the MmpS family.

Its subcellular location is the cell membrane. The sequence is that of Probable transport accessory protein MmpS4 from Mycobacterium leprae (strain TN).